A 3616-amino-acid polypeptide reads, in one-letter code: Replicase polyprotein 1ab (3616 aa).

A C4-type; atypical zinc finger spans residues 8–28 (CLCTPNARVFWEHGQVYCTRC). Positions 69–181 (ECRPGGLCWL…KGLCPFSDAR (113 aa)) constitute a Peptidase C31 domain. Active-site for Nsp1-alpha papain-like cysteine proteinase activity residues include C76 and H147. Residues 262–381 (NDTKFSKCWE…FRFQTRKYYG (120 aa)) form the Peptidase C32 domain. Residues C269 and H340 each act as for Nsp1-beta papain-like cysteine proteinase activity in the active site. The region spanning 381-486 (GYSPPGDGAC…RGVCGGECKF (106 aa)) is the Peptidase C33 domain. Residues C390 and H456 each act as for Nsp2 cysteine proteinase activity in the active site. Disordered regions lie at residues 672-706 (SRAL…REVP) and 883-912 (PLKS…GAPR). Positions 676-690 (KSAKPKRKRNKKKKT) are enriched in basic residues. Over residues 903–912 (DQLSQDGAPR) the composition is skewed to polar residues. The next 9 membrane-spanning stretches (helical) occupy residues 942–962 (WLNH…SVVL), 977–997 (LFCL…FIPL), 1010–1030 (LSVF…VLPE), 1060–1080 (HIGV…VGGP), 1085–1105 (FYFL…AVAL), 1289–1309 (VADF…SAWL), 1364–1384 (ALMI…SLLV), 1386–1406 (VICV…VIAF), and 1425–1445 (VQFF…VILI). The segment at 981–1105 (CCVLLCFHFP…LGLVFLAVAL (125 aa)) is HD1. The tract at residues 1289-1448 (VADFVCLGLY…AVAVILISSW (160 aa)) is HD2. In terms of domain architecture, Peptidase S32 spans 1513 to 1714 (GSLRTRGCAK…AVVESLPTPE (202 aa)). Residues H1551, D1576, and S1628 each act as charge relay system; for 3C-like serine proteinase activity in the active site. The next 4 membrane-spanning stretches (helical) occupy residues 1715 to 1735 (GALS…LIHV), 1737 to 1757 (FVPV…VVLA), 1761 to 1781 (FSFA…VLLL), and 1832 to 1852 (SKEI…LSLF). Residues 1737-1852 (FVPVIAVAFF…HVLALLLSLF (116 aa)) form an HD3 region. The NiRAN domain occupies 2194–2352 (SLNGLQQSSA…LPYKLHPVRG (159 aa)). The RdRp catalytic domain maps to 2590–2724 (GRCLEADLAS…YNESDELPNY (135 aa)). The 64-residue stretch at 2844 to 2907 (KKKCRTCAHC…SSAMNLNTEL (64 aa)) folds into the AV ZBD domain. C2850, C2853, C2863, C2868, H2871, H2873, H2875, H2877, C2884, H2886, C2893, and C2896 together coordinate Zn(2+). The 153-residue stretch at 2964 to 3116 (QVMKVAQTCA…AFSLMPGRQL (153 aa)) folds into the (+)RNA virus helicase ATP-binding domain. Residue 2992–2999 (GAPGTGKT) coordinates ATP. Positions 3117 to 3248 (IEVFRFGPAV…CGDQPKMIVG (132 aa)) constitute a (+)RNA virus helicase C-terminal domain. The AV-Nsp11N/CoV-Nsp15M domain maps to 3272-3368 (EGTASPLPQV…LTKYLKGESV (97 aa)). Residues 3370-3492 (LPDSIMSTGR…MVWKDATAYF (123 aa)) form the NendoU domain.

The protein belongs to the arteriviridae polyprotein family. Post-translationally, specific enzymatic cleavages in vivo by its own proteases yield mature proteins. There are two alternative pathways for processing. Either nsp4-5 is cleaved, which represents the major pathway or the nsp5-6 and nsp6-7 are processed, which represents the minor pathway. The major pathway occurs when nsp2 acts as a cofactor for nsp4.

The protein localises to the host membrane. It localises to the host cytoplasm. The protein resides in the host perinuclear region. The enzyme catalyses RNA(n) + a ribonucleoside 5'-triphosphate = RNA(n+1) + diphosphate. It carries out the reaction ATP + H2O = ADP + phosphate + H(+). The catalysed reaction is uridylyl-uridylyl-ribonucleotide-RNA = a 3'-end uridylyl-2',3'-cyclophospho-uridine-RNA + a 5'-end dephospho-ribonucleoside-RNA. The replicase polyprotein 1ab is a multifunctional protein: it contains the activities necessary for the transcription of negative stranded RNA, leader RNA, subgenomic mRNAs and progeny virion RNA as well as proteinases responsible for the cleavage of the polyprotein into functional products. Functionally, the Nsp1 chain is essential for viral subgenomic mRNA synthesis. Its function is as follows. The 3C-like serine proteinase chain is responsible for the majority of cleavages as it cleaves the C-terminus of the polyprotein. In terms of biological role, the helicase chain, which contains a zinc finger structure, displays RNA and DNA duplex-unwinding activities with 5' to 3' polarity. Plays a role in viral transcription/replication and prevents the simultaneous activation of host cell dsRNA sensors, such as MDA5/IFIH1, OAS, and PKR. Acts by degrading the 5'-polyuridines generated during replication of the poly(A) region of viral genomic and subgenomic RNAs. Catalyzes a two-step reaction in which a 2'3'-cyclic phosphate (2'3'-cP) is first generated by 2'-O transesterification, which is then hydrolyzed to a 3'-phosphate (3'-P). If not degraded, poly(U) RNA would hybridize with poly(A) RNA tails and activate host dsRNA sensors. The polypeptide is Replicase polyprotein 1ab (rep) (Mus musculus domesticus (western European house mouse)).